A 132-amino-acid chain; its full sequence is Small ribosomal subunit protein uS8 (132 aa).

This sequence belongs to the universal ribosomal protein uS8 family. In terms of assembly, part of the 30S ribosomal subunit. Contacts proteins S5 and S12.

Functionally, one of the primary rRNA binding proteins, it binds directly to 16S rRNA central domain where it helps coordinate assembly of the platform of the 30S subunit. In Clostridium tetani (strain Massachusetts / E88), this protein is Small ribosomal subunit protein uS8.